A 660-amino-acid polypeptide reads, in one-letter code: Probable alpha-galactosidase D (660 aa).

The first 20 residues, 1–20 (MLLHFILYAALSSVVTSVSL), serve as a signal peptide directing secretion. Asparagine 47, asparagine 91, and asparagine 129 each carry an N-linked (GlcNAc...) asparagine glycan. Cysteine 124 and cysteine 157 form a disulfide bridge. Residue aspartate 155 is the Nucleophile of the active site. 2 N-linked (GlcNAc...) asparagine glycosylation sites follow: asparagine 182 and asparagine 191. 200-204 (EWGIS) serves as a coordination point for substrate. The active-site Proton donor is the aspartate 222. Asparagine 351, asparagine 403, asparagine 460, asparagine 492, asparagine 506, asparagine 514, and asparagine 584 each carry an N-linked (GlcNAc...) asparagine glycan.

Belongs to the glycosyl hydrolase 27 family.

The protein localises to the secreted. It carries out the reaction Hydrolysis of terminal, non-reducing alpha-D-galactose residues in alpha-D-galactosides, including galactose oligosaccharides, galactomannans and galactolipids.. In terms of biological role, hydrolyzes a variety of simple alpha-D-galactoside as well as more complex molecules such as oligosaccharides and polysaccharides. The polypeptide is Probable alpha-galactosidase D (aglD) (Aspergillus niger (strain ATCC MYA-4892 / CBS 513.88 / FGSC A1513)).